Here is a 446-residue protein sequence, read N- to C-terminus: Sulfoquinovose isomerase (446 aa).

The protein belongs to the SqvD family.

It carries out the reaction 6-sulfo-beta-D-quinovose = 6-deoxy-6-sulfo-D-fructose. Part of the sulfo-TAL (or sulfo-SFT) pathway, a D-sulfoquinovose degradation pathway that produces sulfolactate (SL). Catalyzes the isomerization of sulfoquinovose (SQ) to 6-deoxy-6-sulfo-D-fructose (SF). In Priestia aryabhattai (Bacillus aryabhattai), this protein is Sulfoquinovose isomerase.